The following is a 186-amino-acid chain: Ribosome-recycling factor (186 aa).

This sequence belongs to the RRF family.

The protein localises to the cytoplasm. Functionally, responsible for the release of ribosomes from messenger RNA at the termination of protein biosynthesis. May increase the efficiency of translation by recycling ribosomes from one round of translation to another. The polypeptide is Ribosome-recycling factor (Chlorobium phaeobacteroides (strain BS1)).